The following is a 492-amino-acid chain: MSQKEVADFGLIGLAVMGQNLILNGADKGFTVCCYNRTTSRVDEFLANEAKGKSIVGAHSLEEFVSKLKKPRVCILLVKAGKPVDYLIEGLAPLLEKGDIIVDGGNSHYPDTTRRCEELAKKGILFVGSGVSGGEEGARYGPSLMPGGNPAAWPRIKPIFQTLAAKAGNNEPCCDWVGEQGAGHYVKMVHNGIEYGDMQLICETYDIMKRGLGMSCDEIADVFEKWNTGKLDSFLIEITRDVLRYKADDGKPLVEKILDAAGQKGTGKWTAQNALEMGTPVSLITEAVFARCLSSLKSERVRASKKLTGPNTKFTGDKKQLIDDLEDALYASKIISYAQGFMLMREAAKEYGWKLNNAGIALMWRGGCIIRSVFLKDITEAFREDPNLESILFHPFFTNGVEKAQAGWRRVVAQAAMLGIPVPATSTGLSFYDGYRSAVLPANLLQAQRDYFGAHTFRVLPEAADKSLPADKDIHINWTGHGGNISATTYDA.

NADP(+) is bound by residues 13 to 18 (GLAVMG), 36 to 38 (NRT), 78 to 80 (VKA), and asparagine 106. Asparagine 106 lines the substrate pocket. Serine 107 carries the post-translational modification Phosphoserine. Residue 132-134 (SGG) coordinates substrate. The active-site Proton acceptor is lysine 187. A substrate-binding site is contributed by 190 to 191 (HN). Glutamate 194 serves as the catalytic Proton donor. Residue tyrosine 195 coordinates substrate. Residue serine 215 is modified to Phosphoserine. 4 residues coordinate substrate: lysine 264, arginine 291, arginine 449, and histidine 455.

This sequence belongs to the 6-phosphogluconate dehydrogenase family. Homodimer.

The catalysed reaction is 6-phospho-D-gluconate + NADP(+) = D-ribulose 5-phosphate + CO2 + NADPH. The protein operates within carbohydrate degradation; pentose phosphate pathway; D-ribulose 5-phosphate from D-glucose 6-phosphate (oxidative stage): step 3/3. Its function is as follows. Catalyzes the oxidative decarboxylation of 6-phosphogluconate to ribulose 5-phosphate and CO(2), with concomitant reduction of NADP to NADPH. In Schizosaccharomyces pombe (strain 972 / ATCC 24843) (Fission yeast), this protein is 6-phosphogluconate dehydrogenase, decarboxylating.